The chain runs to 93 residues: RNA-binding protein Hfq (93 aa).

In terms of domain architecture, Sm spans 9-68 (DPFLNALRRERVPVSIYLVNGIKLQGQVESFDQFVILLKNTVSQMVYKHAISTVVPARPF). A disordered region spans residues 70 to 93 (VNSHTAAPSPAGGFNGQQDDNNDQ).

It belongs to the Hfq family. As to quaternary structure, homohexamer.

Functionally, RNA chaperone that binds small regulatory RNA (sRNAs) and mRNAs to facilitate mRNA translational regulation in response to envelope stress, environmental stress and changes in metabolite concentrations. Also binds with high specificity to tRNAs. The protein is RNA-binding protein Hfq of Shewanella sediminis (strain HAW-EB3).